The following is a 154-amino-acid chain: Ribosomal RNA-processing protein 14-N (154 aa).

Positions 36–154 are disordered; sequence WKQKKSTLEE…KHKASPRAGF (119 aa). Serine 80 is modified (phosphoserine). Threonine 83 is subject to Phosphothreonine. The segment covering 105 to 133 has biased composition (basic and acidic residues); that stretch reads QDLREKRKAGDLNQKRQNKRPVENEKDSQ. Over residues 140–154 the composition is skewed to basic residues; the sequence is KVQKKKHKASPRAGF.

This sequence belongs to the SURF6 family.

It is found in the nucleus. The protein resides in the nucleolus. In terms of biological role, involved in ribosome biogenesis and cell polarity. Required for the synthesis of both 40S and 60S ribosomal subunits and may also play some direct role in correct positioning of the mitotic spindle during mitosis. The chain is Ribosomal RNA-processing protein 14-N (rrp14n) from Schizosaccharomyces pombe (strain 972 / ATCC 24843) (Fission yeast).